The sequence spans 66 residues: MKAADVRALSADQLKDELAKLKKEQFNLRFQKATGQLEKSSRINEVRKDIARVKTIARQKAAEAKA.

This sequence belongs to the universal ribosomal protein uL29 family.

The polypeptide is Large ribosomal subunit protein uL29 (Rhizobium rhizogenes (strain K84 / ATCC BAA-868) (Agrobacterium radiobacter)).